A 158-amino-acid polypeptide reads, in one-letter code: Style cell-cycle inhibitor 1-B (158 aa).

Composition is skewed to basic and acidic residues over residues 1–11 (MGSDKKTTEEK) and 22–47 (PRDE…DKSK). A disordered region spans residues 1-88 (MGSDKKTTEE…DKSKNKFEEL (88 aa)). Basic residues-rich tracts occupy residues 48 to 58 (KEKHKSHKSKC) and 67 to 81 (GEKH…KDKS).

As to expression, specifically expressed in flowers pistils, especially in stigmas and styles. Barely detected in roots, stems, leaves, sepals, petals and stamen.

Its subcellular location is the nucleus. Its function is as follows. Component of the auxin signaling transduction pathway that regulates cell proliferation and differentiation during flowers stigmas and styles development. Involved in the regulation of auxin-related genes. The protein is Style cell-cycle inhibitor 1-B of Nicotiana tabacum (Common tobacco).